We begin with the raw amino-acid sequence, 196 residues long: Dephospho-CoA kinase (196 aa).

The DPCK domain maps to 6–196 (AIALTGGIGT…QVERFLKTLL (191 aa)). 14–19 (GTGKST) contacts ATP.

It belongs to the CoaE family.

It localises to the cytoplasm. It carries out the reaction 3'-dephospho-CoA + ATP = ADP + CoA + H(+). It participates in cofactor biosynthesis; coenzyme A biosynthesis; CoA from (R)-pantothenate: step 5/5. Catalyzes the phosphorylation of the 3'-hydroxyl group of dephosphocoenzyme A to form coenzyme A. The protein is Dephospho-CoA kinase of Helicobacter pylori (strain J99 / ATCC 700824) (Campylobacter pylori J99).